Here is a 620-residue protein sequence, read N- to C-terminus: Probable potassium transport system protein Kup (620 aa).

12 helical membrane passes run 11–31 (LAFLAMGIVYGDIGTSPLYAF), 51–71 (ILSLVFWAFVLIVSIKYLLLV), 100–120 (IAMLLGILATGFFFGEAVITP), 138–158 (LAPYVLPIAMMIIVALFAVQA), 167–187 (FFAPVMLLWFLVLALLGAHAI), 202–222 (AVHFVLLYGQHTLFILGLVVL), 246–266 (WFALVMPSLLLNYFGQGAYLL), 288–308 (LILLATFATVIASQAVISGIF), 334–354 (GQIYVPAANMLLFVAVIFVML), 364–384 (AAYGIAVTAIMMISSLLLVLV), 396–416 (VVTIGIVFIGMDSLLLASTST), and 418–438 (LMEGGWLPLLLGCVVFIVMYI).

The protein belongs to the HAK/KUP transporter (TC 2.A.72) family.

The protein resides in the cell inner membrane. It catalyses the reaction K(+)(in) + H(+)(in) = K(+)(out) + H(+)(out). In terms of biological role, transport of potassium into the cell. Likely operates as a K(+):H(+) symporter. The sequence is that of Probable potassium transport system protein Kup from Vibrio cholerae serotype O1 (strain ATCC 39315 / El Tor Inaba N16961).